The sequence spans 167 residues: Telethonin (167 aa).

Serine 39 bears the Phosphoserine mark. The disordered stretch occupies residues 142–167; it reads PVVPVSKPGPLRRTLSRSMSQEAQRG. Residues 157–167 show a composition bias toward polar residues; it reads SRSMSQEAQRG.

Interacts with MYOZ1, MYOZ2 and MYOZ3. Interacts with CSRP3. Interacts directly with the N-terminal Ig-like domains of 2 titin (TTN) molecules. Interacts with ANKRD2; the interaction is direct.

The protein resides in the cytoplasm. Its subcellular location is the myofibril. It localises to the sarcomere. In terms of biological role, muscle assembly regulating factor. Mediates the antiparallel assembly of titin (TTN) molecules at the sarcomeric Z-disk. This is Telethonin (Tcap) from Mus musculus (Mouse).